We begin with the raw amino-acid sequence, 55 residues long: ATP synthase F(0) complex subunit 8 (55 aa).

Residues 9 to 29 (WFAIMVFSWFVFLIFLPPKIM) traverse the membrane as a helical segment.

Belongs to the ATPase protein 8 family. In terms of assembly, component of the ATP synthase complex composed at least of ATP5F1A/subunit alpha, ATP5F1B/subunit beta, ATP5MC1/subunit c (homooctomer), MT-ATP6/subunit a, MT-ATP8/subunit 8, ATP5ME/subunit e, ATP5MF/subunit f, ATP5MG/subunit g, ATP5MK/subunit k, ATP5MJ/subunit j, ATP5F1C/subunit gamma, ATP5F1D/subunit delta, ATP5F1E/subunit epsilon, ATP5PF/subunit F6, ATP5PB/subunit b, ATP5PD/subunit d, ATP5PO/subunit OSCP. ATP synthase complex consists of a soluble F(1) head domain (subunits alpha(3) and beta(3)) - the catalytic core - and a membrane F(0) domain - the membrane proton channel (subunits c, a, 8, e, f, g, k and j). These two domains are linked by a central stalk (subunits gamma, delta, and epsilon) rotating inside the F1 region and a stationary peripheral stalk (subunits F6, b, d, and OSCP).

It is found in the mitochondrion membrane. In terms of biological role, subunit 8, of the mitochondrial membrane ATP synthase complex (F(1)F(0) ATP synthase or Complex V) that produces ATP from ADP in the presence of a proton gradient across the membrane which is generated by electron transport complexes of the respiratory chain. ATP synthase complex consist of a soluble F(1) head domain - the catalytic core - and a membrane F(1) domain - the membrane proton channel. These two domains are linked by a central stalk rotating inside the F(1) region and a stationary peripheral stalk. During catalysis, ATP synthesis in the catalytic domain of F(1) is coupled via a rotary mechanism of the central stalk subunits to proton translocation. In vivo, can only synthesize ATP although its ATP hydrolase activity can be activated artificially in vitro. Part of the complex F(0) domain. The polypeptide is ATP synthase F(0) complex subunit 8 (Tetraodon nigroviridis (Spotted green pufferfish)).